The primary structure comprises 109 residues: FAD assembly factor SdhE (109 aa).

The segment at 1–22 (MQDNFTASSPSSSSSASGVAED) is disordered. Residues 7–17 (ASSPSSSSSAS) show a composition bias toward low complexity.

The protein belongs to the SdhE FAD assembly factor family.

The protein localises to the cytoplasm. In terms of biological role, an FAD assembly protein, which accelerates covalent attachment of the cofactor into other proteins. Plays an essential role in the assembly of succinate dehydrogenase (SDH, respiratory complex II), an enzyme complex that is a component of both the tricarboxylic acid cycle and the electron transport chain, and which couples the oxidation of succinate to fumarate with the reduction of ubiquinone (coenzyme Q) to ubiquinol. Required for flavinylation of SdhA, when the SDH operon and this gene are overexpressed in G.oxydans. Flavinylation of SdhA is detected only in the presence of sdhE. This chain is FAD assembly factor SdhE, found in Acetobacter pasteurianus (strain NBRC 105184 / IFO 3283-01).